Here is a 241-residue protein sequence, read N- to C-terminus: tRNA pseudouridine synthase A (241 aa).

Aspartate 51 (nucleophile) is an active-site residue. Tyrosine 110 contacts substrate.

It belongs to the tRNA pseudouridine synthase TruA family. Homodimer.

The catalysed reaction is uridine(38/39/40) in tRNA = pseudouridine(38/39/40) in tRNA. Formation of pseudouridine at positions 38, 39 and 40 in the anticodon stem and loop of transfer RNAs. The chain is tRNA pseudouridine synthase A from Campylobacter jejuni subsp. jejuni serotype O:2 (strain ATCC 700819 / NCTC 11168).